Here is a 306-residue protein sequence, read N- to C-terminus: Homeobox protein Hox-C13a (306 aa).

Residues 68-90 (SVYSDISSPDTGRQCPAPQTSSS) are disordered. The segment at residues 236-295 (GRKKRVPYTKLQLKELEKEYAASKFITKDKRRRISAATNLSERQVTIWFQNRRVKEKKFI) is a DNA-binding region (homeobox).

It belongs to the Abd-B homeobox family.

The protein resides in the nucleus. Its function is as follows. Sequence-specific transcription factor which is part of a developmental regulatory system that provides cells with specific positional identities on the anterior-posterior axis. The chain is Homeobox protein Hox-C13a (hoxc13a) from Takifugu rubripes (Japanese pufferfish).